We begin with the raw amino-acid sequence, 62 residues long: Large ribosomal subunit protein uL29 (62 aa).

The protein belongs to the universal ribosomal protein uL29 family.

This Ruthia magnifica subsp. Calyptogena magnifica protein is Large ribosomal subunit protein uL29.